A 442-amino-acid chain; its full sequence is UDP-N-acetylmuramate--L-alanine ligase (442 aa).

109 to 115 (GAHGKTS) provides a ligand contact to ATP.

The protein belongs to the MurCDEF family.

Its subcellular location is the cytoplasm. It carries out the reaction UDP-N-acetyl-alpha-D-muramate + L-alanine + ATP = UDP-N-acetyl-alpha-D-muramoyl-L-alanine + ADP + phosphate + H(+). The protein operates within cell wall biogenesis; peptidoglycan biosynthesis. In terms of biological role, cell wall formation. This Streptococcus pyogenes serotype M6 (strain ATCC BAA-946 / MGAS10394) protein is UDP-N-acetylmuramate--L-alanine ligase.